A 434-amino-acid chain; its full sequence is Alpha-enolase (434 aa).

Ser-2 carries the N-acetylserine modification. Position 5 is an N6-acetyllysine (Lys-5). At Ser-27 the chain carries Phosphoserine. Position 40 (Ser-40) interacts with Mg(2+). Tyr-44 is modified (phosphotyrosine). Lys-60 bears the N6-acetyllysine; alternate mark. An N6-succinyllysine; alternate modification is found at Lys-60. Residues Lys-64 and Lys-71 each carry the N6-acetyllysine modification. Lys-89 is modified (N6-acetyllysine; alternate). Lys-89 carries the N6-succinyllysine; alternate modification. N6-acetyllysine occurs at positions 92 and 126. 2 residues coordinate substrate: His-158 and Glu-167. N6-acetyllysine occurs at positions 193 and 199. N6-acetyllysine; alternate is present on Lys-202. Residue Lys-202 forms a Glycyl lysine isopeptide (Lys-Gly) (interchain with G-Cter in SUMO2); alternate linkage. Glu-210 acts as the Proton donor in catalysis. N6-acetyllysine; alternate occurs at positions 228 and 233. Lys-228 carries the N6-succinyllysine; alternate modification. An N6-(2-hydroxyisobutyryl)lysine; alternate modification is found at Lys-228. Lys-233 carries the N6-malonyllysine; alternate modification. Asp-245 contacts Mg(2+). At Ser-254 the chain carries Phosphoserine. Lys-256 bears the N6-acetyllysine mark. Phosphoserine is present on residues Ser-263 and Ser-272. Lys-281 carries the N6-acetyllysine; alternate modification. Lys-281 is modified (N6-(2-hydroxyisobutyryl)lysine; alternate). Residue Lys-285 is modified to N6-acetyllysine. The residue at position 287 (Tyr-287) is a Phosphotyrosine. At Ser-291 the chain carries Phosphoserine. Glu-293 and Asp-318 together coordinate Mg(2+). Residues Glu-293 and Asp-318 each coordinate substrate. Lys-335 and Lys-343 each carry N6-acetyllysine. The active-site Proton acceptor is the Lys-343. Substrate-binding positions include 370–373 and Lys-394; that span reads SHRS. Residues 405-434 form a required for interaction with PLG region; it reads AKYNQLLRIEEELGSKAKFAGRNFRNPLAK. N6-acetyllysine is present on Lys-406. Residue Lys-420 is modified to N6-acetyllysine; alternate. Residue Lys-420 is modified to N6-succinyllysine; alternate. Lys-420 bears the N6-malonyllysine; alternate mark.

This sequence belongs to the enolase family. Mammalian enolase is composed of 3 isozyme subunits, alpha, beta and gamma, which can form homodimers or heterodimers which are cell-type and development-specific. ENO1 interacts with PLG in the neuronal plasma membrane and promotes its activation. The C-terminal lysine is required for this binding. Interacts with ENO4 and PGAM2. Interacts with CMTM6. It depends on Mg(2+) as a cofactor. In terms of processing, ISGylated. Post-translationally, lysine 2-hydroxyisobutyrylation (Khib) by p300/EP300 activates the phosphopyruvate hydratase activity.

It is found in the cytoplasm. It localises to the cell membrane. The catalysed reaction is (2R)-2-phosphoglycerate = phosphoenolpyruvate + H2O. The protein operates within carbohydrate degradation; glycolysis; pyruvate from D-glyceraldehyde 3-phosphate: step 4/5. Functionally, glycolytic enzyme the catalyzes the conversion of 2-phosphoglycerate to phosphoenolpyruvate. In addition to glycolysis, involved in various processes such as growth control, hypoxia tolerance and allergic responses. May also function in the intravascular and pericellular fibrinolytic system due to its ability to serve as a receptor and activator of plasminogen on the cell surface of several cell-types such as leukocytes and neurons. Stimulates immunoglobulin production. This is Alpha-enolase (ENO1) from Pongo abelii (Sumatran orangutan).